The sequence spans 380 residues: Lipid-A-disaccharide synthase (380 aa).

Belongs to the LpxB family.

The catalysed reaction is a lipid X + a UDP-2-N,3-O-bis[(3R)-3-hydroxyacyl]-alpha-D-glucosamine = a lipid A disaccharide + UDP + H(+). The protein operates within bacterial outer membrane biogenesis; LPS lipid A biosynthesis. Its function is as follows. Condensation of UDP-2,3-diacylglucosamine and 2,3-diacylglucosamine-1-phosphate to form lipid A disaccharide, a precursor of lipid A, a phosphorylated glycolipid that anchors the lipopolysaccharide to the outer membrane of the cell. This chain is Lipid-A-disaccharide synthase, found in Francisella tularensis subsp. novicida (strain U112).